Reading from the N-terminus, the 322-residue chain is Alanine dehydrogenase (322 aa).

Lys65 serves as the catalytic Proton donor/acceptor. Residues Arg108, 135 to 136 (TQ), 157 to 159 (DVR), 217 to 219 (GAD), Lys223, and Ser290 each bind NAD(+).

Belongs to the ornithine cyclodeaminase/mu-crystallin family. Archaeal alanine dehydrogenase subfamily. Homodimer.

It carries out the reaction L-alanine + NAD(+) + H2O = pyruvate + NH4(+) + NADH + H(+). Catalyzes the NAD(+)-dependent oxidative deamination of L-alanine to pyruvate, and the reverse reaction, the reductive amination of pyruvate. Its physiological role is not known. Cannot use NADP(+) instead of NAD(+) as a cosubstrate. In the deamination direction, can also efficiently use L-2-aminobutyrate as substrate. In the reductive amination direction, also exhibits high activity with 2-oxobutyrate and oxaloacetate as substrate. In contrast to bacterial homologs, does not exhibit any ornithine cyclodeaminase activity. This chain is Alanine dehydrogenase, found in Archaeoglobus fulgidus (strain ATCC 49558 / DSM 4304 / JCM 9628 / NBRC 100126 / VC-16).